We begin with the raw amino-acid sequence, 418 residues long: Fumarylacetoacetase (418 aa).

Aspartate 127 lines the Ca(2+) pocket. The active-site Proton acceptor is the histidine 134. Ca(2+) contacts are provided by glutamate 200, glutamate 202, and aspartate 235. Mg(2+)-binding residues include aspartate 235, lysine 255, and threonine 259.

Belongs to the FAH family. It depends on Ca(2+) as a cofactor. Requires Mg(2+) as cofactor. As to expression, highly expressed in the intestine and the hypodermis.

The catalysed reaction is 4-fumarylacetoacetate + H2O = acetoacetate + fumarate + H(+). The protein operates within amino-acid degradation; L-phenylalanine degradation; acetoacetate and fumarate from L-phenylalanine: step 6/6. Functionally, fumarylacetoacetase involved in the tyrosine degradation pathway. The polypeptide is Fumarylacetoacetase (Caenorhabditis elegans).